We begin with the raw amino-acid sequence, 299 residues long: 4-diphosphocytidyl-2-C-methyl-D-erythritol kinase (299 aa).

The active site involves Lys33. An ATP-binding site is contributed by 115–125; it reads PLASGLGGGSS. The active site involves Asp154.

Belongs to the GHMP kinase family. IspE subfamily.

The enzyme catalyses 4-CDP-2-C-methyl-D-erythritol + ATP = 4-CDP-2-C-methyl-D-erythritol 2-phosphate + ADP + H(+). It participates in isoprenoid biosynthesis; isopentenyl diphosphate biosynthesis via DXP pathway; isopentenyl diphosphate from 1-deoxy-D-xylulose 5-phosphate: step 3/6. Its function is as follows. Catalyzes the phosphorylation of the position 2 hydroxy group of 4-diphosphocytidyl-2C-methyl-D-erythritol. The polypeptide is 4-diphosphocytidyl-2-C-methyl-D-erythritol kinase (Deinococcus geothermalis (strain DSM 11300 / CIP 105573 / AG-3a)).